The following is a 1411-amino-acid chain: Early endosome antigen 1 (1411 aa).

Positions 1 to 27 (MFRRILQRTPGRVGSQGSDLDSSATPI) are disordered. The span at 15–27 (SQGSDLDSSATPI) shows a compositional bias: polar residues. A C2H2-type zinc finger spans residues 41–64 (FICPQCMKSLGSADELFKHYQAVH). Ser-52 and Ser-70 each carry phosphoserine. A coiled-coil region spans residues 78–1348 (LALTRDDITL…IKHTQALNRK (1271 aa)). Disordered regions lie at residues 476-501 (STEL…QSAT) and 1189-1217 (EKES…KEAK). A compositionally biased stretch (basic and acidic residues) spans 481–490 (HQLEKSKQQH). The span at 491–500 (QEQQALQQSA) shows a compositional bias: low complexity. An FYVE-type zinc finger spans residues 1352 to 1410 (DNEVQNCMSCGKCFSVTVRRHHCRQCGNIFCAECSTKNALTPSSKKPVRVCDACFNDLQ). Residues Cys-1358, Cys-1361, Cys-1374, Cys-1377, Cys-1382, Cys-1385, Cys-1402, and Cys-1405 each contribute to the Zn(2+) site.

As to quaternary structure, homodimer. Binds STX6. Binds RAB5A, RAB5B, RAB5C and RAB22A that have been activated by GTP-binding. Interacts with ERBB2. Interacts with RAB31. Interacts with SAMD9 and SAMD9L. May interact with PLEKHF2.

It is found in the cytoplasm. The protein localises to the early endosome membrane. Binds phospholipid vesicles containing phosphatidylinositol 3-phosphate and participates in endosomal trafficking. The chain is Early endosome antigen 1 (Eea1) from Mus musculus (Mouse).